Reading from the N-terminus, the 352-residue chain is Phosphoribosylformylglycinamidine cyclo-ligase (352 aa).

It belongs to the AIR synthase family.

Its subcellular location is the cytoplasm. It carries out the reaction 2-formamido-N(1)-(5-O-phospho-beta-D-ribosyl)acetamidine + ATP = 5-amino-1-(5-phospho-beta-D-ribosyl)imidazole + ADP + phosphate + H(+). It functions in the pathway purine metabolism; IMP biosynthesis via de novo pathway; 5-amino-1-(5-phospho-D-ribosyl)imidazole from N(2)-formyl-N(1)-(5-phospho-D-ribosyl)glycinamide: step 2/2. The protein is Phosphoribosylformylglycinamidine cyclo-ligase of Pseudomonas syringae pv. tomato (strain ATCC BAA-871 / DC3000).